The following is a 301-amino-acid chain: Ribosomal RNA small subunit methyltransferase A (301 aa).

6 residues coordinate S-adenosyl-L-methionine: Asn-29, Leu-31, Gly-56, Glu-77, Asp-102, and Asn-127.

It belongs to the class I-like SAM-binding methyltransferase superfamily. rRNA adenine N(6)-methyltransferase family. RsmA subfamily.

It is found in the cytoplasm. It carries out the reaction adenosine(1518)/adenosine(1519) in 16S rRNA + 4 S-adenosyl-L-methionine = N(6)-dimethyladenosine(1518)/N(6)-dimethyladenosine(1519) in 16S rRNA + 4 S-adenosyl-L-homocysteine + 4 H(+). In terms of biological role, specifically dimethylates two adjacent adenosines (A1518 and A1519) in the loop of a conserved hairpin near the 3'-end of 16S rRNA in the 30S particle. May play a critical role in biogenesis of 30S subunits. This chain is Ribosomal RNA small subunit methyltransferase A, found in Halothermothrix orenii (strain H 168 / OCM 544 / DSM 9562).